The primary structure comprises 565 residues: Proline--tRNA ligase (565 aa).

Belongs to the class-II aminoacyl-tRNA synthetase family. ProS type 1 subfamily. In terms of assembly, homodimer.

Its subcellular location is the cytoplasm. It catalyses the reaction tRNA(Pro) + L-proline + ATP = L-prolyl-tRNA(Pro) + AMP + diphosphate. In terms of biological role, catalyzes the attachment of proline to tRNA(Pro) in a two-step reaction: proline is first activated by ATP to form Pro-AMP and then transferred to the acceptor end of tRNA(Pro). As ProRS can inadvertently accommodate and process non-cognate amino acids such as alanine and cysteine, to avoid such errors it has two additional distinct editing activities against alanine. One activity is designated as 'pretransfer' editing and involves the tRNA(Pro)-independent hydrolysis of activated Ala-AMP. The other activity is designated 'posttransfer' editing and involves deacylation of mischarged Ala-tRNA(Pro). The misacylated Cys-tRNA(Pro) is not edited by ProRS. This is Proline--tRNA ligase from Lactobacillus johnsonii (strain CNCM I-12250 / La1 / NCC 533).